Reading from the N-terminus, the 152-residue chain is MAKRVQVVLSQDVYKLGRDGDLVEVAPGYARNFLLPQGLAQPVTRGVLKQVEFRRAREAARLVAEKEAAVARKTALETIGRFVIKKQAGEGESIFGTVTNGDVAEAIQVATTQEVDRREITLPEIHKLGFYKVQVKLHADVTAEVEIQVAAL.

The protein belongs to the bacterial ribosomal protein bL9 family.

In terms of biological role, binds to the 23S rRNA. The polypeptide is Large ribosomal subunit protein bL9 (Synechococcus elongatus (strain ATCC 33912 / PCC 7942 / FACHB-805) (Anacystis nidulans R2)).